A 56-amino-acid polypeptide reads, in one-letter code: FAAVSVDCSEYPKPDCTLEYRPLCGSDNKTYANKCNFCNAVVESNGTLTLSHFGKC.

One can recognise a Kazal-like domain in the interval 6-56 (VDCSEYPKPDCTLEYRPLCGSDNKTYANKCNFCNAVVESNGTLTLSHFGKC). 3 disulfide bridges follow: Cys8/Cys38, Cys16/Cys35, and Cys24/Cys56. Asn45 carries N-linked (GlcNAc...) asparagine glycosylation.

The protein resides in the secreted. The chain is Ovomucoid from Callipepla squamata castanogastris (Chestnut bellied scaled quail).